The sequence spans 719 residues: Pesticidal crystal protein Cry1Ib (719 aa).

This sequence belongs to the delta endotoxin family.

Its function is as follows. Promotes colloidosmotic lysis by binding to the midgut epithelial cells of certain coleopteran and lepidopteran species. Active on Plutella xylostella but not on Bombyx mori. This chain is Pesticidal crystal protein Cry1Ib (cry1Ib), found in Bacillus thuringiensis subsp. entomocidus.